Consider the following 200-residue polypeptide: MNQHQVMALAAMCQVAKQVQKVAQYGNNNEHDLEILLSSIIQTSPASPEDVYQGTDNLRDGYKTLLAQLSAGAQKDVEIVKYVGGLMQLERALSANDKSLNELGKRIDDIHRRLDHFAITDESVVAGLADIYSTVLSPLGHRIQVYGKPELLKQQLTQNKIRALLLAGIRSAVLWRQMGGKRRHFFFAKRKIIAIAKAKI.

The protein belongs to the HflD family.

The protein localises to the cytoplasm. Its subcellular location is the cell inner membrane. The protein is High frequency lysogenization protein HflD homolog of Pseudoalteromonas translucida (strain TAC 125).